A 281-amino-acid polypeptide reads, in one-letter code: Cytochrome c oxidase subunit 3 (281 aa).

Helical transmembrane passes span 34–54 (PWPI…VMTF), 59–79 (NGLF…TLWF), 103–123 (GFVL…WAFF), 148–168 (WEVP…VTYA), 179–199 (VIYG…FQGF), 220–240 (ATGF…VGLF), and 259–279 (ILYW…VYWW).

Belongs to the cytochrome c oxidase subunit 3 family. Component of the cytochrome c oxidase (complex IV, CIV), a multisubunit enzyme composed of a catalytic core of 3 subunits and several supernumerary subunits. The complex exists as a monomer or a dimer and forms supercomplexes (SCs) in the inner mitochondrial membrane with ubiquinol-cytochrome c oxidoreductase (cytochrome b-c1 complex, complex III, CIII).

Its subcellular location is the mitochondrion inner membrane. It carries out the reaction 4 Fe(II)-[cytochrome c] + O2 + 8 H(+)(in) = 4 Fe(III)-[cytochrome c] + 2 H2O + 4 H(+)(out). Its function is as follows. Component of the cytochrome c oxidase, the last enzyme in the mitochondrial electron transport chain which drives oxidative phosphorylation. The respiratory chain contains 3 multisubunit complexes succinate dehydrogenase (complex II, CII), ubiquinol-cytochrome c oxidoreductase (cytochrome b-c1 complex, complex III, CIII) and cytochrome c oxidase (complex IV, CIV), that cooperate to transfer electrons derived from NADH and succinate to molecular oxygen, creating an electrochemical gradient over the inner membrane that drives transmembrane transport and the ATP synthase. Cytochrome c oxidase is the component of the respiratory chain that catalyzes the reduction of oxygen to water. Electrons originating from reduced cytochrome c in the intermembrane space (IMS) are transferred via the dinuclear copper A center (CU(A)) of subunit 2 and heme A of subunit 1 to the active site in subunit 1, a binuclear center (BNC) formed by heme A3 and copper B (CU(B)). The BNC reduces molecular oxygen to 2 water molecules using 4 electrons from cytochrome c in the IMS and 4 protons from the mitochondrial matrix. The protein is Cytochrome c oxidase subunit 3 (COX3) of Rhizopus stolonifer (Rhizopus nigricans).